The sequence spans 103 residues: Large ribosomal subunit protein bL21 (103 aa).

It belongs to the bacterial ribosomal protein bL21 family. As to quaternary structure, part of the 50S ribosomal subunit. Contacts protein L20.

Its function is as follows. This protein binds to 23S rRNA in the presence of protein L20. This is Large ribosomal subunit protein bL21 from Mycobacterium sp. (strain JLS).